Consider the following 187-residue polypeptide: UPF0167 protein MT2352 (187 aa).

This sequence belongs to the UPF0167 family.

The protein is UPF0167 protein MT2352 of Mycobacterium tuberculosis (strain CDC 1551 / Oshkosh).